The sequence spans 374 residues: UDP-N-acetylglucosamine--N-acetylmuramyl-(pentapeptide) pyrophosphoryl-undecaprenol N-acetylglucosamine transferase (374 aa).

UDP-N-acetyl-alpha-D-glucosamine contacts are provided by residues 13–15, Asn124, Arg165, Ser193, and Gln294; that span reads TGG.

This sequence belongs to the glycosyltransferase 28 family. MurG subfamily.

It is found in the cell inner membrane. It catalyses the reaction di-trans,octa-cis-undecaprenyl diphospho-N-acetyl-alpha-D-muramoyl-L-alanyl-D-glutamyl-meso-2,6-diaminopimeloyl-D-alanyl-D-alanine + UDP-N-acetyl-alpha-D-glucosamine = di-trans,octa-cis-undecaprenyl diphospho-[N-acetyl-alpha-D-glucosaminyl-(1-&gt;4)]-N-acetyl-alpha-D-muramoyl-L-alanyl-D-glutamyl-meso-2,6-diaminopimeloyl-D-alanyl-D-alanine + UDP + H(+). Its pathway is cell wall biogenesis; peptidoglycan biosynthesis. Functionally, cell wall formation. Catalyzes the transfer of a GlcNAc subunit on undecaprenyl-pyrophosphoryl-MurNAc-pentapeptide (lipid intermediate I) to form undecaprenyl-pyrophosphoryl-MurNAc-(pentapeptide)GlcNAc (lipid intermediate II). The chain is UDP-N-acetylglucosamine--N-acetylmuramyl-(pentapeptide) pyrophosphoryl-undecaprenol N-acetylglucosamine transferase from Rhizobium meliloti (strain 1021) (Ensifer meliloti).